The sequence spans 307 residues: Transcription factor bHLH127 (307 aa).

Disordered regions lie at residues 41–68 (SDPLPILRGSGSGGREENTPLPPPLPHQ) and 101–155 (PHPQ…AEMH). Pro residues predominate over residues 110–119 (APPPPKPPSS). In terms of domain architecture, bHLH spans 150 to 199 (RAAEMHNLAERRRREKINERMKTLQQLIPRCNKSTKVSMLEDVIEYVKSL).

Belongs to the bHLH protein family. In terms of assembly, homodimer.

It localises to the nucleus. This Arabidopsis thaliana (Mouse-ear cress) protein is Transcription factor bHLH127 (BHLH127).